A 215-amino-acid chain; its full sequence is Pyrophosphatase PpaX (215 aa).

Asp-9 serves as the catalytic Nucleophile.

This sequence belongs to the HAD-like hydrolase superfamily. PpaX family. Requires Mg(2+) as cofactor.

The catalysed reaction is diphosphate + H2O = 2 phosphate + H(+). In terms of biological role, hydrolyzes pyrophosphate formed during P-Ser-HPr dephosphorylation by HPrK/P. Might play a role in controlling the intracellular pyrophosphate pool. In Bacillus mycoides (strain KBAB4) (Bacillus weihenstephanensis), this protein is Pyrophosphatase PpaX.